The primary structure comprises 888 residues: Interference hedgehog (888 aa).

A signal peptide spans 1 to 24 (MSLTRFSLCLLLTLLLAAIPVYLA). At 25-688 (SPDPGVRILR…SHNETFNLNP (664 aa)) the chain is on the extracellular side. Ig-like C2-type domains lie at 28–123 (PGVR…ARLE), 134–215 (EGFK…VRLA), 234–321 (PHLL…SIQL), and 327–414 (PRIV…LQVN). Intrachain disulfides connect Cys-51-Cys-106, Cys-155-Cys-203, and Cys-257-Cys-305. N-linked (GlcNAc...) asparagine glycosylation is found at Asn-80, Asn-185, Asn-192, Asn-281, Asn-336, Asn-365, Asn-369, and Asn-455. Residues Cys-348 and Cys-396 are joined by a disulfide bond. 2 Fibronectin type-III domains span residues 450–557 (PPSA…LQRG) and 565–660 (VPSL…TQRP). Heparin is bound by residues Arg-486 and Lys-493. Residue Asn-516 is glycosylated (N-linked (GlcNAc...) asparagine). Position 531 (Arg-531) interacts with heparin. Asn-547 carries N-linked (GlcNAc...) asparagine glycosylation. The span at 655–667 (GRTQRPRVSTTTE) shows a compositional bias: polar residues. Residues 655–679 (GRTQRPRVSTTTEPAVHAMDTTTPS) form a disordered region. N-linked (GlcNAc...) asparagine glycosylation occurs at Asn-681. Residues 689-709 (LLTGTIGGGALLVLLVVSACL) form a helical membrane-spanning segment. Residues 710 to 888 (CLCRRRSSRG…SSGSLNSVGV (179 aa)) are Cytoplasmic-facing. 3 disordered regions span residues 759–789 (AQQQ…DMSY), 812–864 (SSSL…PGRV), and 869–888 (ARLS…SVGV). Positions 760–775 (QQQQQQQQQQQQQQQQ) are enriched in low complexity. Residues 843–859 (QPTDGSTADSPRLQASN) are compositionally biased toward polar residues. Residues 872 to 888 (SSRSENLSSGSLNSVGV) show a composition bias toward low complexity.

This sequence belongs to the immunoglobulin superfamily. IHOG family. In terms of assembly, homodimer. Heterotetramer; 2 iHog chains bind 2 hh chains when facilitated by heparin, heparin is required to promote high-affinity interactions between hh and iHog.

Its subcellular location is the membrane. Mediates response to the active Hedgehog (Hh) protein signal in embryos, functioning upstream or at the level of patched (ptc). This Drosophila grimshawi (Hawaiian fruit fly) protein is Interference hedgehog.